We begin with the raw amino-acid sequence, 117 residues long: Class I hydrophobin 2 (117 aa).

The N-terminal stretch at 1 to 21 (EIVSLSLSLLAVVPLVVLVIA) is a signal peptide. Intrachain disulfides connect Cys35/Cys96, Cys42/Cys90, Cys43/Cys76, and Cys97/Cys110.

It belongs to the fungal hydrophobin family. Self-assembles to form functional amyloid fibrils called rodlets. Self-assembly into fibrillar rodlets occurs spontaneously at hydrophobic:hydrophilic interfaces and the rodlets further associate laterally to form amphipathic monolayers.

The protein localises to the secreted. The protein resides in the cell wall. Functionally, aerial growth, conidiation, and dispersal of filamentous fungi in the environment rely upon a capability of their secreting small amphipathic proteins called hydrophobins (HPBs) with low sequence identity. Class I can self-assemble into an outermost layer of rodlet bundles on aerial cell surfaces, conferring cellular hydrophobicity that supports fungal growth, development and dispersal; whereas Class II form highly ordered films at water-air interfaces through intermolecular interactions but contribute nothing to the rodlet structure. In Pisolithus tinctorius (Dead man's foot), this protein is Class I hydrophobin 2.